A 284-amino-acid polypeptide reads, in one-letter code: RNase adapter protein RapZ (284 aa).

8–15 (GRSGSGKS) is an ATP binding site. A GTP-binding site is contributed by 56-59 (DVRN). An RNA-binding region spans residues 266–284 (RSRGKNVQSRHRTLEKRRS).

Belongs to the RapZ-like family. RapZ subfamily. In terms of assembly, homotrimer.

Modulates the synthesis of GlmS, by affecting the processing and stability of the regulatory small RNA GlmZ. When glucosamine-6-phosphate (GlcN6P) concentrations are high in the cell, RapZ binds GlmZ and targets it to cleavage by RNase E. Consequently, GlmZ is inactivated and unable to activate GlmS synthesis. Under low GlcN6P concentrations, RapZ is sequestered and inactivated by an other regulatory small RNA, GlmY, preventing GlmZ degradation and leading to synthesis of GlmS. This chain is RNase adapter protein RapZ, found in Erwinia tasmaniensis (strain DSM 17950 / CFBP 7177 / CIP 109463 / NCPPB 4357 / Et1/99).